Reading from the N-terminus, the 363-residue chain is Peptide chain release factor 1 (363 aa).

The residue at position 237 (Q237) is an N5-methylglutamine. Basic and acidic residues predominate over residues 284–296 (EDEKRRSAEESTR). The disordered stretch occupies residues 284–306 (EDEKRRSAEESTRRSLVASGDRS).

It belongs to the prokaryotic/mitochondrial release factor family. Post-translationally, methylated by PrmC. Methylation increases the termination efficiency of RF1.

Its subcellular location is the cytoplasm. Functionally, peptide chain release factor 1 directs the termination of translation in response to the peptide chain termination codons UAG and UAA. This Shewanella oneidensis (strain ATCC 700550 / JCM 31522 / CIP 106686 / LMG 19005 / NCIMB 14063 / MR-1) protein is Peptide chain release factor 1.